The sequence spans 537 residues: 4-coumarate--CoA ligase (537 aa).

Serine 189, serine 190, glycine 191, threonine 192, threonine 193, and lysine 197 together coordinate ATP. (E)-4-coumaroyl-AMP is bound by residues tyrosine 239 and serine 243. CoA is bound at residue lysine 260. Residues 262–331 form an SBD1 region; it reads NLTTCLELIQ…ERFPKAIFGQ (70 aa). 5 residues coordinate (E)-4-coumaroyl-AMP: alanine 309, glutamine 331, glycine 332, threonine 336, and methionine 344. 3 residues coordinate ATP: glutamine 331, glycine 332, and threonine 336. Residues 332–399 form an SBD2 region; that stretch reads GYGMTEAGPV…IRGPEIMKGY (68 aa). ATP is bound by residues aspartate 420 and arginine 435. (E)-4-coumaroyl-AMP contacts are provided by lysine 437 and lysine 441. 2 residues coordinate CoA: lysine 443 and glycine 444. ATP is bound at residue lysine 524.

Belongs to the ATP-dependent AMP-binding enzyme family. The cofactor is Mg(2+).

The enzyme catalyses (E)-4-coumarate + ATP + CoA = (E)-4-coumaroyl-CoA + AMP + diphosphate. It catalyses the reaction (E)-4-coumarate + ATP + H(+) = (E)-4-coumaroyl-AMP + diphosphate. The catalysed reaction is (E)-4-coumaroyl-AMP + CoA = (E)-4-coumaroyl-CoA + AMP + H(+). It functions in the pathway phytoalexin biosynthesis; 3,4',5-trihydroxystilbene biosynthesis; 3,4',5-trihydroxystilbene from trans-4-coumarate: step 1/2. Carboxylate--CoA ligase that may use 4-coumarate as substrate. Follows a two-step reaction mechanism, wherein the carboxylate substrate first undergoes adenylation by ATP, followed by a thioesterification in the presence of CoA to yield the final CoA thioester. The sequence is that of 4-coumarate--CoA ligase (4CL) from Pinus taeda (Loblolly pine).